A 481-amino-acid polypeptide reads, in one-letter code: WD repeat-containing protein 55 homolog (481 aa).

Residues 1-116 (MHTHNHFKTP…NRDVETNFDL (116 aa)) form a disordered region. Acidic residues-rich tracts occupy residues 12 to 23 (DAEEVDDLDDEM), 31 to 46 (IEQEVLFESDSDDDGF), and 68 to 81 (DSFDPNAEDSDSDD). 6 WD repeats span residues 144–183 (KLEDFVTDISFHPERNIIALATIIGDVHLYEYANEGNKLI), 188–227 (VHSKACRDVEFTEDGRNLLTCSKDKCVMVTDMETEKLKKL), 231–269 (AHDDAINTLHVLNENLFATGDDAGTVKLWDLRTKQHVFE), 272–311 (QIDDQVTQLLSNEQNTLLLATSADGYLTTFNIPGRKLYVQ), 314–353 (PYEEELNCMGIYRGDSKLVVGTSKGKLYSYNWGSFGYHCD), and 398–437 (QHNMPIEALDVNSTGELLASSSHNNDVRFWNVKYFEDFGD).

It belongs to the WD repeat WDR55 family.

The polypeptide is WD repeat-containing protein 55 homolog (Drosophila ananassae (Fruit fly)).